The sequence spans 156 residues: Small ribosomal subunit protein uS7 (156 aa).

Belongs to the universal ribosomal protein uS7 family. Part of the 30S ribosomal subunit. Contacts proteins S9 and S11.

Its function is as follows. One of the primary rRNA binding proteins, it binds directly to 16S rRNA where it nucleates assembly of the head domain of the 30S subunit. Is located at the subunit interface close to the decoding center, probably blocks exit of the E-site tRNA. The protein is Small ribosomal subunit protein uS7 of Lactobacillus helveticus (strain DPC 4571).